A 138-amino-acid polypeptide reads, in one-letter code: Spermidine export protein MdtJ (138 aa).

Transmembrane regions (helical) follow at residues 1–21, 30–50, 54–74, and 81–101; these read MIYW…TLSM, VVGM…LAMA, VALG…ITVF, and ESLS…IMLI.

Belongs to the drug/metabolite transporter (DMT) superfamily. Small multidrug resistance (SMR) (TC 2.A.7.1) family. MdtJ subfamily. In terms of assembly, forms a complex with MdtI.

Its subcellular location is the cell inner membrane. Functionally, catalyzes the excretion of spermidine. The chain is Spermidine export protein MdtJ from Photorhabdus laumondii subsp. laumondii (strain DSM 15139 / CIP 105565 / TT01) (Photorhabdus luminescens subsp. laumondii).